A 217-amino-acid polypeptide reads, in one-letter code: Pyridoxine/pyridoxamine 5'-phosphate oxidase (217 aa).

Residues 66–71 (RMVLLK), 81–82 (FT), Arg-87, Lys-88, and Gln-110 each bind FMN. Residue Lys-71 coordinates substrate. Residues Tyr-128, Arg-132, and Ser-136 each coordinate substrate. FMN contacts are provided by residues 145–146 (QS) and Trp-190. A substrate-binding site is contributed by 196-198 (RLH). Arg-200 serves as a coordination point for FMN.

It belongs to the pyridoxamine 5'-phosphate oxidase family. As to quaternary structure, homodimer. Requires FMN as cofactor.

It catalyses the reaction pyridoxamine 5'-phosphate + O2 + H2O = pyridoxal 5'-phosphate + H2O2 + NH4(+). The catalysed reaction is pyridoxine 5'-phosphate + O2 = pyridoxal 5'-phosphate + H2O2. It participates in cofactor metabolism; pyridoxal 5'-phosphate salvage; pyridoxal 5'-phosphate from pyridoxamine 5'-phosphate: step 1/1. The protein operates within cofactor metabolism; pyridoxal 5'-phosphate salvage; pyridoxal 5'-phosphate from pyridoxine 5'-phosphate: step 1/1. Its function is as follows. Catalyzes the oxidation of either pyridoxine 5'-phosphate (PNP) or pyridoxamine 5'-phosphate (PMP) into pyridoxal 5'-phosphate (PLP). This is Pyridoxine/pyridoxamine 5'-phosphate oxidase from Colwellia psychrerythraea (strain 34H / ATCC BAA-681) (Vibrio psychroerythus).